The following is a 560-amino-acid chain: Probable sulfate transporter Rv1739c (560 aa).

The segment at 1–436 (MIPTMTSAGW…VLGFVPGIAG (436 aa)) is required for sulfate transport in E.coli. 11 helical membrane-spanning segments follow: residues 29-49 (VLAG…YATV), 51-71 (GLPP…YALL), 79-99 (IGPE…MAAG), 105-125 (AVLA…AGTA), 138-158 (VLVG…LGTI), 184-204 (WPTF…TRWA), 207-227 (APGP…MSLD), 256-276 (ALII…VLTA), 333-353 (LIAL…LAMF), 355-375 (IAAL…LSEF), and 394-414 (AAVL…LSIL). Residues 442-557 (DYPQAKRVPG…MTLPTAVQAF (116 aa)) form the STAS domain.

The protein belongs to the SLC26A/SulP transporter (TC 2.A.53) family.

It is found in the cell membrane. Its function is as follows. Expression in E.coli induces sulfate uptake during early- to mid-log phase growth. Uptake is maximal at pH 6.0, is sulfate-specific, requires E.coli CysA and the transmembrane segment but not the STAS domain of the protein. The protein is Probable sulfate transporter Rv1739c of Mycobacterium tuberculosis (strain ATCC 25618 / H37Rv).